Consider the following 463-residue polypeptide: Chaperone SurA (463 aa).

Positions 1-25 (MTKPFSVLLASLLVITSTVSPLASA) are cleaved as a signal peptide. PpiC domains lie at 174–276 (GSQY…KLVE) and 289–388 (LTEY…QRVG). Disordered stretches follow at residues 329 to 348 (ATAK…GDLG) and 434 to 463 (GDRA…QPTR). Residues 440–452 (DATAAPEPAAAPA) are compositionally biased toward low complexity. Residues 453-463 (APTPPPAQPTR) are compositionally biased toward pro residues.

The protein localises to the periplasm. It catalyses the reaction [protein]-peptidylproline (omega=180) = [protein]-peptidylproline (omega=0). Its function is as follows. Chaperone involved in the correct folding and assembly of outer membrane proteins. Recognizes specific patterns of aromatic residues and the orientation of their side chains, which are found more frequently in integral outer membrane proteins. May act in both early periplasmic and late outer membrane-associated steps of protein maturation. The chain is Chaperone SurA from Xanthomonas campestris pv. campestris (strain 8004).